The chain runs to 323 residues: Glucokinase (323 aa).

An ATP-binding site is contributed by 8–13 (GDVGGT).

This sequence belongs to the bacterial glucokinase family.

The protein localises to the cytoplasm. The catalysed reaction is D-glucose + ATP = D-glucose 6-phosphate + ADP + H(+). This is Glucokinase from Yersinia pseudotuberculosis serotype I (strain IP32953).